Here is a 389-residue protein sequence, read N- to C-terminus: MCNFVFCFGSHNKKLLSDRIKSSKKGWYLYLGKKYRIGIKIITLSGRKYISVNFNKSIEFMKFLVRKNIHCNIFDQSHKCKSHNHYKNYLRYIIDNKCMDHIKIFYGKFFPLIRSQGRINNIIDIAKPLVLFENYTVDMDLGIDQETIMCIFKYGKMIDMASLLIHVLCTISDVTIEFLDDMLSIYRHKIIKLLTKEKHELDNDFNIMPMDVFLIPSFRNDDVDMFYFVVEEMFKLHDYIDTGNLTERELNVFNIFVYKLNADTINATINTHLIGLNHIHDFLVFYCPKIFNQLVLKLNDETSLNESIIFDILQLDFIEYMITVCETIGNNNPKILNKFLRYAKSTEMAQLLIDYDADYEKLYKSSKFHECNDCVKHFIENLVEETIDT.

The protein belongs to the mimivirus L17x/L18x family.

This is an uncharacterized protein from Acanthamoeba polyphaga mimivirus (APMV).